The sequence spans 338 residues: Methionine aminopeptidase 1D, mitochondrial (338 aa).

The transit peptide at 1-47 directs the protein to the mitochondrion; that stretch reads MAAPCAAQCLYRTGGLRLLQRISRLPHCHKDASLAHQCQFHRSFFWR. Residue His-164 participates in substrate binding. Positions 181, 192, and 255 each coordinate a divalent metal cation. His-262 is a binding site for substrate. A divalent metal cation is bound by residues Glu-287 and Glu-318.

This sequence belongs to the peptidase M24A family. Methionine aminopeptidase type 1 subfamily. The cofactor is Co(2+). Zn(2+) serves as cofactor. Requires Mn(2+) as cofactor. Fe(2+) is required as a cofactor.

It localises to the mitochondrion. It catalyses the reaction Release of N-terminal amino acids, preferentially methionine, from peptides and arylamides.. In terms of biological role, removes the N-terminal methionine from nascent proteins. The N-terminal methionine is often cleaved when the second residue in the primary sequence is small and uncharged (Met-Ala-, Cys, Gly, Pro, Ser, Thr, or Val). Requires deformylation of the N(alpha)-formylated initiator methionine before it can be hydrolyzed. This Danio rerio (Zebrafish) protein is Methionine aminopeptidase 1D, mitochondrial (metap1d).